Consider the following 672-residue polypeptide: UvrABC system protein B (672 aa).

Positions 26–181 (AGLEDGLAYQ…ILQRLAELQY (156 aa)) constitute a Helicase ATP-binding domain. 39–46 (GVTGSGKT) serves as a coordination point for ATP. Positions 92-115 (YYDYYQPEAYVPSSDTYIEKDASI) match the Beta-hairpin motif. The Helicase C-terminal domain maps to 430–592 (QVDDLLSEIK…ITPKSIQKAV (163 aa)). One can recognise a UVR domain in the interval 631–666 (AKELRKLEEQMYHHARNLEFEEAAAVRDKIQHIRKG).

The protein belongs to the UvrB family. In terms of assembly, forms a heterotetramer with UvrA during the search for lesions. Interacts with UvrC in an incision complex.

It localises to the cytoplasm. Functionally, the UvrABC repair system catalyzes the recognition and processing of DNA lesions. A damage recognition complex composed of 2 UvrA and 2 UvrB subunits scans DNA for abnormalities. Upon binding of the UvrA(2)B(2) complex to a putative damaged site, the DNA wraps around one UvrB monomer. DNA wrap is dependent on ATP binding by UvrB and probably causes local melting of the DNA helix, facilitating insertion of UvrB beta-hairpin between the DNA strands. Then UvrB probes one DNA strand for the presence of a lesion. If a lesion is found the UvrA subunits dissociate and the UvrB-DNA preincision complex is formed. This complex is subsequently bound by UvrC and the second UvrB is released. If no lesion is found, the DNA wraps around the other UvrB subunit that will check the other stand for damage. The polypeptide is UvrABC system protein B (Coxiella burnetii (strain CbuK_Q154) (Coxiella burnetii (strain Q154))).